The sequence spans 356 residues: Tyrosine recombinase XerS (356 aa).

Residues 16–121 (IMPSYVLEYY…ALSSLYKYLT (106 aa)) enclose the Core-binding (CB) domain. The Tyr recombinase domain maps to 169 to 354 (GFLDYIDNEY…INEEQKNALD (186 aa)). Active-site residues include Arg-210, Lys-234, His-306, Arg-309, and His-332. Tyr-341 acts as the O-(3'-phospho-DNA)-tyrosine intermediate in catalysis.

Belongs to the 'phage' integrase family. XerS subfamily.

The protein resides in the cytoplasm. FtsK is required for recombination. In terms of biological role, site-specific tyrosine recombinase, which acts by catalyzing the cutting and rejoining of the recombining DNA molecules. Essential to convert dimers of the bacterial chromosome into monomers to permit their segregation at cell division. This is Tyrosine recombinase XerS from Lactococcus lactis subsp. lactis (strain IL1403) (Streptococcus lactis).